Reading from the N-terminus, the 313-residue chain is Vacuolar membrane protein ZYRO0A01628g (313 aa).

The span at 22-37 shows a compositional bias: low complexity; it reads SASKTSSHTSKTSYSA. The disordered stretch occupies residues 22 to 48; sequence SASKTSSHTSKTSYSAVVTPPSSDGNP. A helical transmembrane segment spans residues 59-79; it reads GLIYIIVGGTAAAIFAFIILW. Positions 221–234 are enriched in low complexity; the sequence is TSLPSASESSSNLL. A disordered region spans residues 221–313; that stretch reads TSLPSASESS…LLEGNDDGTT (93 aa). A compositionally biased stretch (basic and acidic residues) spans 235-247; the sequence is DRPERTASPERKP. Positions 248 to 257 are enriched in basic residues; that stretch reads KAYGRYHQRN. The span at 285–301 shows a compositional bias: polar residues; that stretch reads NVNNNNKKHGTTPSRFL.

This sequence belongs to the PRM5 family.

It is found in the vacuole membrane. The protein is Vacuolar membrane protein ZYRO0A01628g of Zygosaccharomyces rouxii (strain ATCC 2623 / CBS 732 / NBRC 1130 / NCYC 568 / NRRL Y-229).